Reading from the N-terminus, the 449-residue chain is Phosphoglucosamine mutase (449 aa).

S104 functions as the Phosphoserine intermediate in the catalytic mechanism. Residues S104, D243, D245, and D247 each coordinate Mg(2+). Position 104 is a phosphoserine (S104).

The protein belongs to the phosphohexose mutase family. Mg(2+) serves as cofactor. Activated by phosphorylation.

The enzyme catalyses alpha-D-glucosamine 1-phosphate = D-glucosamine 6-phosphate. Its function is as follows. Catalyzes the conversion of glucosamine-6-phosphate to glucosamine-1-phosphate. The sequence is that of Phosphoglucosamine mutase from Xanthomonas euvesicatoria pv. vesicatoria (strain 85-10) (Xanthomonas campestris pv. vesicatoria).